The following is a 472-amino-acid chain: Adenosylhomocysteinase (472 aa).

Residues Thr64, Asp138, and Glu198 each coordinate substrate. NAD(+) is bound at residue 199 to 201 (TTT). The substrate site is built by Lys228 and Asp232. NAD(+)-binding positions include Asn233, 262 to 267 (GFGDVG), Glu285, Asn320, 341 to 343 (IGH), and Asn386.

It belongs to the adenosylhomocysteinase family. NAD(+) is required as a cofactor.

The protein resides in the cytoplasm. The catalysed reaction is S-adenosyl-L-homocysteine + H2O = L-homocysteine + adenosine. Its pathway is amino-acid biosynthesis; L-homocysteine biosynthesis; L-homocysteine from S-adenosyl-L-homocysteine: step 1/1. Functionally, may play a key role in the regulation of the intracellular concentration of adenosylhomocysteine. This is Adenosylhomocysteinase from Prochlorococcus marinus (strain MIT 9215).